The chain runs to 502 residues: MHIKPEEITSIIKNEIKNYEKELETVDSGTIIQIGDGVARVYGLEECMEGELLEFPNQVFGMALNLEQDNVGCVLLGSEEGIKEGDIVKRTGKIVEVPVGEDLIGRVVNSLGQPIDGKGPIKNDGYRAIEVPAPGILERSSVNEPLQTGIKAIDSMIPIGRGQRELIIGDRQTGKTAIAIDTIINQKGKDVICIYVAIGQKQSTVANIVNTLTEEGAMDYSIVVTASASESAPLQYIAPYSGCTMGEYFMNKGKHVLIIYDDLSKHAVAYRTMSLLIRRPPGREAYPGDVFYIHSRLLERAAKLSKENGGGSLTALPIIETLAGDVTAYIPTNVISITDGQIFLETELFNAGQRPAVNPGISVSRVGGNAQIKAMKQVSGTLRLELAQYRELASFAQFGSDLDKDTQARLEKGKRLIEILKQDQYKPMAVEKQIMIIYAAVNNFLLDIKVSDIKRFEKEFLEYMDTHHREIGKAILDKKVLDDELKSALESAIVEFKKIFLM.

169–176 (GDRQTGKT) provides a ligand contact to ATP.

This sequence belongs to the ATPase alpha/beta chains family. As to quaternary structure, F-type ATPases have 2 components, CF(1) - the catalytic core - and CF(0) - the membrane proton channel. CF(1) has five subunits: alpha(3), beta(3), gamma(1), delta(1), epsilon(1). CF(0) has three main subunits: a(1), b(2) and c(9-12). The alpha and beta chains form an alternating ring which encloses part of the gamma chain. CF(1) is attached to CF(0) by a central stalk formed by the gamma and epsilon chains, while a peripheral stalk is formed by the delta and b chains.

The protein localises to the cell membrane. The enzyme catalyses ATP + H2O + 4 H(+)(in) = ADP + phosphate + 5 H(+)(out). Produces ATP from ADP in the presence of a proton gradient across the membrane. The alpha chain is a regulatory subunit. This is ATP synthase subunit alpha from Clostridium perfringens (strain ATCC 13124 / DSM 756 / JCM 1290 / NCIMB 6125 / NCTC 8237 / Type A).